Consider the following 120-residue polypeptide: Large ribosomal subunit protein bL17 (120 aa).

It belongs to the bacterial ribosomal protein bL17 family. As to quaternary structure, part of the 50S ribosomal subunit. Contacts protein L32.

The protein is Large ribosomal subunit protein bL17 of Bacillus cereus (strain ATCC 14579 / DSM 31 / CCUG 7414 / JCM 2152 / NBRC 15305 / NCIMB 9373 / NCTC 2599 / NRRL B-3711).